The following is a 152-amino-acid chain: D-erythrulose-4-phosphate isomerase 2 (152 aa).

The Proton acceptor role is filled by Cys-70.

This sequence belongs to the LacAB/RpiB family.

The enzyme catalyses D-erythrulose 4-phosphate = D-erythrose 4-phosphate. Its pathway is carbohydrate metabolism; erythritol degradation. It participates in carbohydrate metabolism; D-threitol degradation. The protein operates within carbohydrate metabolism; L-threitol degradation. In terms of biological role, catalyzes the isomerization of D-erythrulose-4P to D-erythrose-4P. Involved in the degradation pathways of L-threitol, D-threitol and erythritol, that allow M.smegmatis to grow on these compounds as the sole carbon source. The sequence is that of D-erythrulose-4-phosphate isomerase 2 from Mycolicibacterium smegmatis (strain ATCC 700084 / mc(2)155) (Mycobacterium smegmatis).